We begin with the raw amino-acid sequence, 341 residues long: MQSITVALDAMGGDFGPRVTVPAAVQALSHFPELKVILIGDQSLITSQLSQLGTSTSSRLTILHSEKVISNSEKPSLALRNSQNSSMRMAIDLVSDQEADACVSGGNTGALMALSRFILKLLPGIERPALVSALPTISGKRTWMLDLGANVSCDADSLFQFAVMGSALAEEHLCRPPRVAVLNIGAEEIKGNDLVKRCAEMLSQTDAINFVGYIEGNQILHDVADVIVCDGFVGNVCLKASEGTAQLFIEKLKTSMMASTIKGWIARKLFSRLFNELKTLNPDQYNGASLLGLRGIVIKSHGSADVSAIVNALGEAVHEVKRQVPSRISDRLEAVLLERHY.

Belongs to the PlsX family. In terms of assembly, homodimer. Probably interacts with PlsY.

It is found in the cytoplasm. The enzyme catalyses a fatty acyl-[ACP] + phosphate = an acyl phosphate + holo-[ACP]. It functions in the pathway lipid metabolism; phospholipid metabolism. Its function is as follows. Catalyzes the reversible formation of acyl-phosphate (acyl-PO(4)) from acyl-[acyl-carrier-protein] (acyl-ACP). This enzyme utilizes acyl-ACP as fatty acyl donor, but not acyl-CoA. The sequence is that of Phosphate acyltransferase from Vibrio parahaemolyticus serotype O3:K6 (strain RIMD 2210633).